Reading from the N-terminus, the 179-residue chain is Translation initiation factor IF-3 (179 aa).

Belongs to the IF-3 family. Monomer.

Its subcellular location is the cytoplasm. In terms of biological role, IF-3 binds to the 30S ribosomal subunit and shifts the equilibrium between 70S ribosomes and their 50S and 30S subunits in favor of the free subunits, thus enhancing the availability of 30S subunits on which protein synthesis initiation begins. The chain is Translation initiation factor IF-3 from Leptospira interrogans serogroup Icterohaemorrhagiae serovar copenhageni (strain Fiocruz L1-130).